We begin with the raw amino-acid sequence, 89 residues long: Teretoxin Tan6.8 (89 aa).

Residues 1-21 (MRLLLILLLLTPVILAGSLDE) form the signal peptide. The tract at residues 22-42 (EPNNADGANAASFTADQEGRH) is disordered. A propeptide spanning residues 22–44 (EPNNADGANAASFTADQEGRHKR) is cleaved from the precursor.

Post-translationally, contains 3 disulfide bonds. Expressed by the venom duct.

Its subcellular location is the secreted. The chain is Teretoxin Tan6.8 from Terebra anilis (Auger snail).